The primary structure comprises 323 residues: Elongation factor P--(R)-beta-lysine ligase (323 aa).

Position 74 to 76 (74 to 76 (SPE)) interacts with substrate. ATP contacts are provided by residues 98-100 (RNE) and Asn-107. Position 116 (Tyr-116) interacts with substrate. 242 to 243 (EL) serves as a coordination point for ATP. Glu-249 lines the substrate pocket. Position 298 (Gly-298) interacts with ATP.

It belongs to the class-II aminoacyl-tRNA synthetase family. EpmA subfamily. As to quaternary structure, homodimer.

It catalyses the reaction D-beta-lysine + L-lysyl-[protein] + ATP = N(6)-((3R)-3,6-diaminohexanoyl)-L-lysyl-[protein] + AMP + diphosphate + H(+). With EpmB is involved in the beta-lysylation step of the post-translational modification of translation elongation factor P (EF-P). Catalyzes the ATP-dependent activation of (R)-beta-lysine produced by EpmB, forming a lysyl-adenylate, from which the beta-lysyl moiety is then transferred to the epsilon-amino group of a conserved specific lysine residue in EF-P. This chain is Elongation factor P--(R)-beta-lysine ligase, found in Vibrio atlanticus (strain LGP32) (Vibrio splendidus (strain Mel32)).